The following is a 129-amino-acid chain: MAKAPIRARKRVKKQVSDGVAHIHASFNNTIVTITDRQGNALGWATAGGSGFRGSRKSTPFAAQVAAERCAEAVKEYGIKNLEVVVKGPGPGRESTVRALNAAGFRITNITDVTPIPHNGCRPPKKRRV.

It belongs to the universal ribosomal protein uS11 family. Part of the 30S ribosomal subunit. Interacts with proteins S7 and S18. Binds to IF-3.

Its function is as follows. Located on the platform of the 30S subunit, it bridges several disparate RNA helices of the 16S rRNA. Forms part of the Shine-Dalgarno cleft in the 70S ribosome. This is Small ribosomal subunit protein uS11 from Sodalis glossinidius (strain morsitans).